The following is a 205-amino-acid chain: SCO2-like protein RF_0960 (205 aa).

Cysteine 82, cysteine 86, and histidine 172 together coordinate Cu cation.

This sequence belongs to the SCO1/2 family.

This is SCO2-like protein RF_0960 from Rickettsia felis (strain ATCC VR-1525 / URRWXCal2) (Rickettsia azadi).